The chain runs to 154 residues: Ribosomal RNA large subunit methyltransferase H (154 aa).

Residues Leu70 and Gly102 each contribute to the S-adenosyl-L-methionine site.

Belongs to the RNA methyltransferase RlmH family. Homodimer.

It localises to the cytoplasm. The catalysed reaction is pseudouridine(1915) in 23S rRNA + S-adenosyl-L-methionine = N(3)-methylpseudouridine(1915) in 23S rRNA + S-adenosyl-L-homocysteine + H(+). Its function is as follows. Specifically methylates the pseudouridine at position 1915 (m3Psi1915) in 23S rRNA. The sequence is that of Ribosomal RNA large subunit methyltransferase H from Hyphomonas neptunium (strain ATCC 15444).